The primary structure comprises 656 residues: Fidgetin-like protein 1 (656 aa).

The span at 293 to 302 shows a compositional bias: polar residues; the sequence is KYSNQPQRNP. A disordered region spans residues 293 to 354; the sequence is KYSNQPQRNP…QGNSEMNAPS (62 aa). The segment covering 331-340 has biased composition (basic and acidic residues); that stretch reads RQEDVQDSNR. ATP is bound by residues Ala-386 and 426–431; that span reads GTGKTL.

Belongs to the AAA ATPase family. In terms of assembly, hexamer. Requires Mg(2+) as cofactor.

It is found in the nucleus. The protein resides in the cytoplasm. The protein localises to the perinuclear region. The catalysed reaction is ATP + H2O = ADP + phosphate + H(+). Functionally, may be involved in DNA double-strand break (DBS) repair via homologous recombination (HR). May regulate osteoblast proliferation and differentiation. This Xenopus tropicalis (Western clawed frog) protein is Fidgetin-like protein 1 (fignl1).